The sequence spans 468 residues: Cysteine--tRNA ligase (468 aa).

C33 is a binding site for Zn(2+). The short motif at 35–45 (ATVQGLPHIGH) is the 'HIGH' region element. C211, H236, and E240 together coordinate Zn(2+). Positions 267–271 (KMSKS) match the 'KMSKS' region motif. ATP is bound at residue K270.

Belongs to the class-I aminoacyl-tRNA synthetase family. Monomer. Requires Zn(2+) as cofactor.

The protein localises to the cytoplasm. The enzyme catalyses tRNA(Cys) + L-cysteine + ATP = L-cysteinyl-tRNA(Cys) + AMP + diphosphate. This is Cysteine--tRNA ligase from Mycobacterium ulcerans (strain Agy99).